Here is a 428-residue protein sequence, read N- to C-terminus: Methyl-branched lipid omega-hydroxylase (428 aa).

Heme is bound at residue Cys379.

Belongs to the cytochrome P450 family. Heme is required as a cofactor.

The enzyme catalyses a methyl-branched lipid + O2 + 2 reduced ferredoxin [iron-sulfur] cluster + 2 H(+) = an omega-hydroxy-methyl-branched lipid + H2O + 2 oxidized ferredoxin [iron-sulfur] cluster.. It catalyses the reaction cholest-4-en-3-one + 6 reduced [2Fe-2S]-[ferredoxin] + 3 O2 + 5 H(+) = (25R)-3-oxocholest-4-en-26-oate + 6 oxidized [2Fe-2S]-[ferredoxin] + 4 H2O. The protein operates within lipid metabolism; branched-chain fatty acid metabolism. Its function is as follows. Primarily hydroxylates the omega-carbon of a number of methyl-branched lipids, including (2E,6E)-farnesol, phytanate, geranylgeraniol, 15-methylpalmitate and (2E,6E)-farnesyl diphosphate. Also catalyzes the sequential oxidation of the terminal methyl of cholest-4-en-3-one into (25R)-26-hydroxycholest-4-en-3-one (alcohol), (25R)-26-oxocholest-4-en-3-one (aldehyde), to finally yield the carboxylic acid (25R)-3-oxocholest-4-en-26-oate. Also able to sequentially oxidize cholesterol itself, not only cholest-4-en-3-one. The sequence is that of Methyl-branched lipid omega-hydroxylase (cyp124) from Mycobacterium bovis (strain ATCC BAA-935 / AF2122/97).